A 135-amino-acid chain; its full sequence is HTH-type transcriptional activator AarP (135 aa).

Residues 22-120 (SEILVWIEGN…GISPSLYRLS (99 aa)) form the HTH araC/xylS-type domain. DNA-binding regions (H-T-H motif) lie at residues 39–60 (DDIA…RKIV) and 87–110 (VIDI…KAYL).

Its function is as follows. Transcriptional activator of 2'-N-acetyltransferase. The sequence is that of HTH-type transcriptional activator AarP (aarP) from Providencia stuartii.